Here is a 361-residue protein sequence, read N- to C-terminus: Protein RecA (361 aa).

Position 77–84 (77–84 (GPESSGKT)) interacts with ATP.

The protein belongs to the RecA family.

It is found in the cytoplasm. Can catalyze the hydrolysis of ATP in the presence of single-stranded DNA, the ATP-dependent uptake of single-stranded DNA by duplex DNA, and the ATP-dependent hybridization of homologous single-stranded DNAs. It interacts with LexA causing its activation and leading to its autocatalytic cleavage. This chain is Protein RecA, found in Brucella anthropi (strain ATCC 49188 / DSM 6882 / CCUG 24695 / JCM 21032 / LMG 3331 / NBRC 15819 / NCTC 12168 / Alc 37) (Ochrobactrum anthropi).